The primary structure comprises 1571 residues: Neurexin-3 (1571 aa).

Positions 1–27 (MSFTLHSVFFTLKVSIFLGSLVGLCLG) are cleaved as a signal peptide. Positions 28–202 (LEFMGLPNQW…SVQLEAEGPC (175 aa)) constitute a Laminin G-like 1 domain. The Extracellular portion of the chain corresponds to 28–1496 (LEFMGLPNQW…EVIRESSSTT (1469 aa)). N-linked (GlcNAc...) asparagine glycans are attached at residues Asn58 and Asn105. Positions 198-235 (AEGPCGERPCENGGICFLLDGHPTCDCSTTGYGGTLCS) constitute an EGF-like 1 domain. 3 disulfide bridges follow: Cys202–Cys213, Cys207–Cys222, and Cys224–Cys234. Laminin G-like domains are found at residues 258–440 (VATF…VFKC) and 447–639 (DPIN…KSSC). Ca(2+) is bound by residues Asp304, Leu321, and Met374. 5 disulfides stabilise this stretch: Cys404–Cys440, Cys610–Cys639, Cys647–Cys658, Cys652–Cys667, and Cys669–Cys679. The 38-residue stretch at 643–680 (SAKQCDSYPCKNNAVCKDGWNRFICDCTGTGYWGRTCE) folds into the EGF-like 2 domain. Laminin G-like domains are found at residues 685-857 (ILSY…IDYC) and 871-1046 (DPVT…ERGC). The Ca(2+) site is built by Asp732 and Leu749. Asn757 carries N-linked (GlcNAc...) asparagine glycosylation. A Ca(2+)-binding site is contributed by Arg807. 4 cysteine pairs are disulfide-bonded: Cys1018–Cys1046, Cys1053–Cys1064, Cys1058–Cys1073, and Cys1075–Cys1085. The 38-residue stretch at 1049–1086 (PSTTCQEDSCANQGVCMQQWEGFTCDCSMTSYSGNQCN) folds into the EGF-like 3 domain. Residues 1090-1290 (ATYIFGKSGG…NPNIKINGSV (201 aa)) form the Laminin G-like 6 domain. Ca(2+) is bound by residues Asp1142 and Ile1159. The N-linked (GlcNAc...) asparagine glycan is linked to Asn1189. Residues Ile1241 and Asn1243 each coordinate Ca(2+). 2 N-linked (GlcNAc...) asparagine glycosylation sites follow: Asn1287 and Asn1331. Positions 1324–1348 (ATTTTRKNRSTASIQPTSDDLVSSA) are disordered. Residues 1333 to 1348 (STASIQPTSDDLVSSA) show a composition bias toward polar residues. O-linked (Xyl...) (heparan sulfate) serine glycosylation occurs at Ser1347. The chain crosses the membrane as a helical span at residues 1497–1517 (GMVVGIVAAAALCILILLYAM). The Cytoplasmic segment spans residues 1518-1571 (YKYRNRDEGSYQVDETRNYISNSAQSNGTLMKEKQASSKSGHKKQKNKDKEYYV). Residues 1539–1571 (NSAQSNGTLMKEKQASSKSGHKKQKNKDKEYYV) form a disordered region.

The protein belongs to the neurexin family. As to quaternary structure, the laminin G-like domain 2 binds to NXPH1. Specific isoforms bind to alpha-dystroglycan. The cytoplasmic C-terminal region binds to CASK. Specific isoforms bind neuroligins NLGN1, NLGN2 and NLGN3. Interacts with CLSTN3. In terms of processing, O-glycosylated; contains heparan sulfate. Heparan sulfate attachment is required for synapse development by mediating interactions with neuroligins. As to expression, brain and arteries (at protein level).

The protein resides in the presynaptic cell membrane. Neuronal cell surface protein that may be involved in cell recognition and cell adhesion. May mediate intracellular signaling. The polypeptide is Neurexin-3 (Nrxn3) (Mus musculus (Mouse)).